The primary structure comprises 591 residues: Aspartate--tRNA ligase (591 aa).

Glutamate 173 provides a ligand contact to L-aspartate. Positions 197–200 are aspartate; that stretch reads QLFK. Arginine 219 is an L-aspartate binding site. Residues 219–221 and glutamine 228 each bind ATP; that span reads RDE. Residue histidine 448 participates in L-aspartate binding. Glutamate 482 lines the ATP pocket. Arginine 489 contributes to the L-aspartate binding site. 534–537 is a binding site for ATP; sequence GLDR.

Belongs to the class-II aminoacyl-tRNA synthetase family. Type 1 subfamily. In terms of assembly, homodimer.

Its subcellular location is the cytoplasm. The enzyme catalyses tRNA(Asp) + L-aspartate + ATP = L-aspartyl-tRNA(Asp) + AMP + diphosphate. Its function is as follows. Catalyzes the attachment of L-aspartate to tRNA(Asp) in a two-step reaction: L-aspartate is first activated by ATP to form Asp-AMP and then transferred to the acceptor end of tRNA(Asp). The sequence is that of Aspartate--tRNA ligase from Shewanella oneidensis (strain ATCC 700550 / JCM 31522 / CIP 106686 / LMG 19005 / NCIMB 14063 / MR-1).